A 144-amino-acid chain; its full sequence is Large ribosomal subunit protein uL15 (144 aa).

The disordered stretch occupies residues 1–57 (MRLNTLSPAPGSKPSAKRVGRGIGSGLGKTCGRGHKGQKSRSGGSVRPGFEGGQMPL). Residues 21 to 31 (RGIGSGLGKTC) show a composition bias toward gly residues.

Belongs to the universal ribosomal protein uL15 family. Part of the 50S ribosomal subunit.

Functionally, binds to the 23S rRNA. This chain is Large ribosomal subunit protein uL15, found in Photobacterium profundum (strain SS9).